We begin with the raw amino-acid sequence, 251 residues long: Probable transcriptional regulatory protein CT1665 (251 aa).

Belongs to the TACO1 family.

The protein localises to the cytoplasm. The chain is Probable transcriptional regulatory protein CT1665 from Chlorobaculum tepidum (strain ATCC 49652 / DSM 12025 / NBRC 103806 / TLS) (Chlorobium tepidum).